The chain runs to 522 residues: Maturase K (522 aa).

Belongs to the intron maturase 2 family. MatK subfamily.

The protein resides in the plastid. Its subcellular location is the chloroplast. In terms of biological role, usually encoded in the trnK tRNA gene intron. Probably assists in splicing its own and other chloroplast group II introns. In Schizorhiza neglecta (Lapeirousia neglecta), this protein is Maturase K.